The following is a 376-amino-acid chain: Cyclin-dependent kinase 9-A (376 aa).

Residues 19-319 form the Protein kinase domain; it reads YERLAKIGQG…SDDALNNDFF (301 aa). ATP is bound by residues 25 to 33 and lysine 48; that span reads IGQGTFGEV. Aspartate 153 serves as the catalytic Proton acceptor. The interval 345–376 is disordered; the sequence is PPRRRGGHMPQQPANQARNPAATNQSEFERVF. A compositionally biased stretch (low complexity) spans 354-369; the sequence is PQQPANQARNPAATNQ.

The protein belongs to the protein kinase superfamily. CMGC Ser/Thr protein kinase family. CDC2/CDKX subfamily. In terms of assembly, associates with cyclin-T to form P-TEFb.

The protein localises to the nucleus. The enzyme catalyses L-seryl-[protein] + ATP = O-phospho-L-seryl-[protein] + ADP + H(+). It carries out the reaction L-threonyl-[protein] + ATP = O-phospho-L-threonyl-[protein] + ADP + H(+). The catalysed reaction is [DNA-directed RNA polymerase] + ATP = phospho-[DNA-directed RNA polymerase] + ADP + H(+). Its function is as follows. Member of the cyclin-dependent kinase pair (CDK9/cyclin-T) complex, also called positive transcription elongation factor B (P-TEFb), which is proposed to facilitate the transition from abortive to production elongation by phosphorylating the CTD (C-terminal domain) of the large subunit of RNA polymerase II (RNAP II) and SUPT5H. The protein is Cyclin-dependent kinase 9-A (cdk9-a) of Xenopus laevis (African clawed frog).